The primary structure comprises 135 residues: Large ribosomal subunit protein uL22 (135 aa).

This sequence belongs to the universal ribosomal protein uL22 family. In terms of assembly, part of the 50S ribosomal subunit.

Functionally, this protein binds specifically to 23S rRNA; its binding is stimulated by other ribosomal proteins, e.g. L4, L17, and L20. It is important during the early stages of 50S assembly. It makes multiple contacts with different domains of the 23S rRNA in the assembled 50S subunit and ribosome. Its function is as follows. The globular domain of the protein is located near the polypeptide exit tunnel on the outside of the subunit, while an extended beta-hairpin is found that lines the wall of the exit tunnel in the center of the 70S ribosome. This Christiangramia forsetii (strain DSM 17595 / CGMCC 1.15422 / KT0803) (Gramella forsetii) protein is Large ribosomal subunit protein uL22.